We begin with the raw amino-acid sequence, 65 residues long: Hirudin-2 (65 aa).

The interaction with thrombin active site stretch occupies residues 1–3; sequence ITY. 3 cysteine pairs are disulfide-bonded: Cys-6–Cys-14, Cys-16–Cys-28, and Cys-22–Cys-39. A disordered region spans residues 39–65; that stretch reads CVTGEGTPKPQSHNDGDFEEIPEEYLQ. O-linked (GalNAc...) threonine glycosylation occurs at Thr-45. Residues 55 to 65 are interaction with fibrinogen-binding exosite of thrombin; the sequence is DFEEIPEEYLQ. Residues 55–65 show a composition bias toward acidic residues; sequence DFEEIPEEYLQ. Tyr-63 carries the post-translational modification Sulfotyrosine.

This sequence belongs to the protease inhibitor I14 (hirudin) family.

The protein localises to the secreted. Its function is as follows. Hirudin is a potent thrombin-specific protease inhibitor. It forms a stable non-covalent complex with alpha-thrombin, thereby abolishing its ability to cleave fibrinogen. The sequence is that of Hirudin-2 from Hirudo medicinalis (Medicinal leech).